Here is a 185-residue protein sequence, read N- to C-terminus: Large ribosomal subunit protein uL5 (185 aa).

It belongs to the universal ribosomal protein uL5 family. In terms of assembly, part of the 50S ribosomal subunit; part of the 5S rRNA/L5/L18/L25 subcomplex. Contacts the 5S rRNA and the P site tRNA. Forms a bridge to the 30S subunit in the 70S ribosome.

This is one of the proteins that bind and probably mediate the attachment of the 5S RNA into the large ribosomal subunit, where it forms part of the central protuberance. In the 70S ribosome it contacts protein S13 of the 30S subunit (bridge B1b), connecting the 2 subunits; this bridge is implicated in subunit movement. Contacts the P site tRNA; the 5S rRNA and some of its associated proteins might help stabilize positioning of ribosome-bound tRNAs. This chain is Large ribosomal subunit protein uL5, found in Streptomyces coelicolor (strain ATCC BAA-471 / A3(2) / M145).